Here is a 564-residue protein sequence, read N- to C-terminus: 3beta-hydroxysteroid-dehydrogenase/decarboxylase isoform 2 (564 aa).

16–21 lines the NAD(+) pocket; the sequence is GGRGFA. N-linked (GlcNAc...) asparagine glycosylation is found at asparagine 146 and asparagine 158. Residues tyrosine 161 and lysine 165 each coordinate NAD(+). Residue lysine 165 is the Proton donor of the active site. The 181-residue stretch at 384–564 folds into the Reticulon domain; the sequence is VADTLLWKDL…EKLFGSKKHD (181 aa). The next 2 helical transmembrane spans lie at 398–418 and 424–444; these read IAIFILISIYYNFVATGSTVV and ALLVASVFLFLHGILPEKIFG. N-linked (GlcNAc...) asparagine glycosylation is present at asparagine 474. Transmembrane regions (helical) follow at residues 486 to 506 and 507 to 527; these read GNDWSFFFKVVFVLLALSLAG and AISLHSIFVIGLPIAFLAFLV.

The protein belongs to the 3-beta-HSD family.

The protein resides in the endoplasmic reticulum membrane. The catalysed reaction is a 3beta-hydroxysteroid-4alpha-carboxylate + NAD(+) = a 3-oxosteroid + CO2 + NADH. The enzyme catalyses 4alpha-carboxy-4beta,14alpha-dimethyl-9beta,19-cyclo-5alpha-ergost-24(24(1))-en-3beta-ol + NAD(+) = cycloeucalenone + CO2 + NADH. Its pathway is steroid biosynthesis; zymosterol biosynthesis; zymosterol from lanosterol: step 4/6. Functionally, 3beta-hydroxysteroid-dehydrogenase/decarboxylase involved in sterol synthesis. Catalyzes the formation of 3-oxosteroids from 3beta-hydroxysteroids-4alpha-carboxylate. Involved in the regulation of inflorescence internodes and leaves growth, probably by affecting auxin transporter activity possibly by altering sterol composition in the membranes. This chain is 3beta-hydroxysteroid-dehydrogenase/decarboxylase isoform 2, found in Arabidopsis thaliana (Mouse-ear cress).